Here is a 688-residue protein sequence, read N- to C-terminus: ATP-dependent RNA helicase ded1 (688 aa).

Composition is skewed to polar residues over residues 1-15 (MADQLSSGMGNLSID) and 55-67 (GLNNSAWAGNNNY). Residues 1-170 (MADQLSSGMG…TPDDPSKQHT (170 aa)) form a disordered region. A compositionally biased stretch (gly residues) spans 88–102 (GFEGQQGAGWGGPRP). Residues 103 to 114 (QGGFNPNAYRGN) are compositionally biased toward low complexity. Residues 115–129 (AGAGAGAGAGGGGGS) show a composition bias toward gly residues. The short motif at 194 to 222 (LTFSNPPLDNHLISNIQLARYNVPTPVQK) is the Q motif element. The 192-residue stretch at 225–416 (IPIVMGGRDL…RDFLKDYIFL (192 aa)) folds into the Helicase ATP-binding domain. Position 238 to 245 (238 to 245 (AQTGSGKT)) interacts with ATP. Residues 360–363 (DEAD) carry the DEAD box motif. In terms of domain architecture, Helicase C-terminal spans 427-587 (NITQKVEYVE…EVPAFLETIA (161 aa)). The segment at 590-615 (SSFGGGRGGRGGGRGGGRGRTQTADY) is disordered. The segment covering 592–608 (FGGGRGGRGGGRGGGRG) has biased composition (gly residues).

It belongs to the DEAD box helicase family. DDX3/DED1 subfamily.

It localises to the cytoplasm. It carries out the reaction ATP + H2O = ADP + phosphate + H(+). Its function is as follows. ATP-binding RNA helicase involved in translation initiation. Remodels RNA in response to ADP and ATP concentrations by facilitating disruption, but also formation of RNA duplexes. The chain is ATP-dependent RNA helicase ded1 (drh-9) from Neurospora crassa (strain ATCC 24698 / 74-OR23-1A / CBS 708.71 / DSM 1257 / FGSC 987).